The following is a 441-amino-acid chain: Baicalein 7-O-glucuronosyltransferase (441 aa).

This sequence belongs to the UDP-glycosyltransferase family. As to quaternary structure, homodimer.

The enzyme catalyses baicalein + UDP-alpha-D-glucuronate = baicalin + UDP. Its activity is regulated as follows. Inhibited by copper, zinc and iron, p-Chloromercuri-benzoic acid (PCMBA) and 4,4'-diisothiocyanostilbene-2,2'-disulfonic acid (DIDS), but not by N-ethylmaleimide (NEM), dithioerythritol (DTE), calcium or magnesium. Functionally, involved in the production of glucuronosylated baicalein, a flavonoid that shows antiallergic, anti-HIV and antitumor activities. Can use baicalein, scutellarein and wogonin as substrates, but not chrysin, apigenin, luteolin, quercetin, formononetin and daidzein. Highly specific for UDP-glucuronate (UDP-GlcUA) and no activity with UDP-glucose or UDP-galacturonic acid. This Scutellaria baicalensis (Baical skullcap) protein is Baicalein 7-O-glucuronosyltransferase (UBGAT-I).